We begin with the raw amino-acid sequence, 828 residues long: Glycerol-3-phosphate acyltransferase 1, mitochondrial (828 aa).

The Cytoplasmic segment spans residues 1 to 87 (MDESALTLGT…FFNPSIPSLG (87 aa)). Positions 80-120 (NPSIPSLGLRNVIYINETHTRHRGWLARRLSYVLFIQERDV) are important for mitochondrial localization. The stretch at 88–118 (LRNVIYINETHTRHRGWLARRLSYVLFIQER) is an intramembrane region. Over 119–828 (DVHKGMFATN…LEYILSFVVL (710 aa)) the chain is Cytoplasmic. Residues 230-235 (HRSHID) carry the HXXXXD motif motif. Positions 278, 279, 288, 293, and 328 each coordinate CoA. Serine 380 carries the post-translational modification Phosphoserine. The segment at 435–455 (SRPSDAADEGRDTSINESRNA) is disordered. The segment covering 442–455 (DEGRDTSINESRNA) has biased composition (basic and acidic residues). CoA is bound at residue arginine 462. Phosphoserine occurs at positions 688 and 695. 2 positions are modified to N6-acetyllysine: lysine 780 and lysine 784.

Belongs to the GPAT/DAPAT family.

The protein localises to the mitochondrion outer membrane. It catalyses the reaction sn-glycerol 3-phosphate + an acyl-CoA = a 1-acyl-sn-glycero-3-phosphate + CoA. The catalysed reaction is (9Z,12Z)-octadecadienoyl-CoA + sn-glycerol 3-phosphate = 1-(9Z,12Z)-octadecadienoyl-sn-glycero-3-phosphate + CoA. It carries out the reaction sn-glycerol 3-phosphate + (9Z)-octadecenoyl-CoA = 1-(9Z-octadecenoyl)-sn-glycero-3-phosphate + CoA. The enzyme catalyses sn-glycerol 3-phosphate + octadecanoyl-CoA = 1-octadecanoyl-sn-glycero-3-phosphate + CoA. It catalyses the reaction sn-glycerol 3-phosphate + hexadecanoyl-CoA = 1-hexadecanoyl-sn-glycero-3-phosphate + CoA. The catalysed reaction is dodecanoyl-CoA + sn-glycerol 3-phosphate = 1-dodecanoyl-sn-glycerol 3-phosphate + CoA. It carries out the reaction 1-acyl-sn-glycero-3-phospho-(1'-sn-glycerol) + an acyl-CoA = a 1,2-diacyl-sn-glycero-3-phospho-(1'-sn-glycerol) + CoA. It participates in phospholipid metabolism; CDP-diacylglycerol biosynthesis; CDP-diacylglycerol from sn-glycerol 3-phosphate: step 1/3. Functionally, mitochondrial membrane protein that catalyzes the essential first step of biosynthesis of glycerolipids such as triglycerides, phosphatidic acids and lysophosphatidic acids. Esterifies acyl-group from acyl-coenzyme A (acyl-CoA) to the sn-1 position of glycerol-3-phosphate, to produce lysophosphatidic acid. Has a narrow hydrophobic binding cleft that selects for a linear acyl chain. Catalytic activity is higher for substrates with a 16-carbon acyl chain. The sequence is that of Glycerol-3-phosphate acyltransferase 1, mitochondrial from Homo sapiens (Human).